A 329-amino-acid chain; its full sequence is GTP 3',8-cyclase (329 aa).

Residues 8 to 234 form the Radical SAM core domain; the sequence is AFARKFYYLR…QLRQRSDGPA (227 aa). Arg17 contacts GTP. Positions 24 and 28 each coordinate [4Fe-4S] cluster. Tyr30 lines the S-adenosyl-L-methionine pocket. Cys31 contributes to the [4Fe-4S] cluster binding site. Residue Arg68 coordinates GTP. Gly72 provides a ligand contact to S-adenosyl-L-methionine. Thr99 serves as a coordination point for GTP. Ser123 contributes to the S-adenosyl-L-methionine binding site. Lys160 is a binding site for GTP. Met194 provides a ligand contact to S-adenosyl-L-methionine. The [4Fe-4S] cluster site is built by Cys257 and Cys260. 262–264 provides a ligand contact to GTP; the sequence is RLR. Cys274 is a [4Fe-4S] cluster binding site.

It belongs to the radical SAM superfamily. MoaA family. Monomer and homodimer. The cofactor is [4Fe-4S] cluster.

The enzyme catalyses GTP + AH2 + S-adenosyl-L-methionine = (8S)-3',8-cyclo-7,8-dihydroguanosine 5'-triphosphate + 5'-deoxyadenosine + L-methionine + A + H(+). It participates in cofactor biosynthesis; molybdopterin biosynthesis. Catalyzes the cyclization of GTP to (8S)-3',8-cyclo-7,8-dihydroguanosine 5'-triphosphate. The sequence is that of GTP 3',8-cyclase from Salmonella paratyphi B (strain ATCC BAA-1250 / SPB7).